A 142-amino-acid polypeptide reads, in one-letter code: Large ribosomal subunit protein uL13 (142 aa).

Belongs to the universal ribosomal protein uL13 family. As to quaternary structure, part of the 50S ribosomal subunit.

Its function is as follows. This protein is one of the early assembly proteins of the 50S ribosomal subunit, although it is not seen to bind rRNA by itself. It is important during the early stages of 50S assembly. The sequence is that of Large ribosomal subunit protein uL13 from Pseudomonas entomophila (strain L48).